The following is a 456-amino-acid chain: GTPase Der (456 aa).

2 consecutive EngA-type G domains span residues Pro4–Asp169 and Val178–Arg353. GTP is bound by residues Gly10–Ser17, Asp57–Leu61, Asn120–Glu123, Gly184–Ser191, Asp231–Ile235, and Asn296–Asp299. The region spanning Arg354–Gln439 is the KH-like domain.

Belongs to the TRAFAC class TrmE-Era-EngA-EngB-Septin-like GTPase superfamily. EngA (Der) GTPase family. Associates with the 50S ribosomal subunit.

Its function is as follows. GTPase that plays an essential role in the late steps of ribosome biogenesis. The chain is GTPase Der from Prochlorococcus marinus (strain NATL1A).